A 100-amino-acid polypeptide reads, in one-letter code: Suppressor of silencing 2b (100 aa).

The Nuclear localization signal motif lies at 22-27; it reads KRRRRR.

It belongs to the cucumovirus/ilarvirus protein 2b family. As to quaternary structure, homotetramer. Interacts with host AGO1; this interaction blocks AGO1 cleavage activity to attenuate RNA silencing and thus counter host defense. Interacts with host JAZ.

The protein localises to the host nucleus. In terms of biological role, multifunctional protein that plays two independent roles: viral suppressor of host RNAi (VSR) and viral inducer of host attractiveness to insect vectors (VIA). Acts as a suppressor of RNA-mediated gene silencing, also known as post-transcriptional gene silencing (PTGS), a mechanism of plant viral defense that limits the accumulation of viral RNAs. May directly interfere with mobile silencing signaling. Also inhibits signal transduction by the phytohormone jasmonate, making the infected plant more attractive to aphids, which are the second host to play a role as a dissemination vector. Acts by binding to and inhibiting JAZ degradation in the host. This is Suppressor of silencing 2b from Cucumis sativus (Cucumber).